The following is a 138-amino-acid chain: Histone H2AX (138 aa).

The disordered stretch occupies residues M1 to S23. S2 carries the N-acetylserine modification. N6-acetyllysine is present on residues K6, K9, K11, K13, and K18. S123 is modified (phosphoserine). A Glycyl lysine isopeptide (Lys-Gly) (interchain with G-Cter in ubiquitin) cross-link involves residue K124. Phosphoserine is present on residues S125, S130, and S135. A [ST]-Q motif motif is present at residues S135–Q136.

It belongs to the histone H2A family. As to quaternary structure, the nucleosome is a histone octamer containing two molecules each of H2A, H2B, H3 and H4 assembled in one H3-H4 heterotetramer and two H2A-H2B heterodimers. The octamer wraps approximately 147 bp of DNA. In terms of processing, monoubiquitination of Lys-124 gives a specific tag for epigenetic transcriptional repression. Phosphorylated to form H2AX134ph (gamma-H2AX) in response to DNA double-strand breaks (DSBs) generated by exogenous genotoxic agents in both the mitotic MIC and the amitotic MAC. Gamma-H2AX is also found when programmed DNA rearrangements occur, namely homologous recombination in the MIC during prophase of meiosis, and chromosome fragmentation and DNA elimination in developing MACs. Gamma-H2AX is important to recover from exogenous DNA damage and to repair breaks associated with normal micronuclear meiosis and mitosis and macronuclear amitotic division. Post-translationally, acetylation occurs almost exclusively in the MAC.

The protein localises to the nucleus. It is found in the chromosome. In terms of biological role, core component of nucleosome which plays a central role in DNA double strand break (DSB) repair. Nucleosomes wrap and compact DNA into chromatin, limiting DNA accessibility to the cellular machineries which require DNA as a template. Histones thereby play a central role in transcription regulation, DNA repair, DNA replication and chromosomal stability. DNA accessibility is regulated via a complex set of post-translational modifications of histones, also called histone code, and nucleosome remodeling. The chain is Histone H2AX (HTA1) from Tetrahymena thermophila (strain SB210).